The sequence spans 345 residues: Protein RecA (345 aa).

Residue 65-72 coordinates ATP; sequence GPESSGKT.

The protein belongs to the RecA family.

It is found in the cytoplasm. Functionally, can catalyze the hydrolysis of ATP in the presence of single-stranded DNA, the ATP-dependent uptake of single-stranded DNA by duplex DNA, and the ATP-dependent hybridization of homologous single-stranded DNAs. It interacts with LexA causing its activation and leading to its autocatalytic cleavage. The sequence is that of Protein RecA from Stenotrophomonas maltophilia (strain R551-3).